The primary structure comprises 504 residues: 2,3-bisphosphoglycerate-independent phosphoglycerate mutase (504 aa).

Asp11 and Ser61 together coordinate Mn(2+). Ser61 functions as the Phosphoserine intermediate in the catalytic mechanism. Residues His122, Arg152–Asp153, Arg183, Arg189, Arg255–Arg258, and Lys329 contribute to the substrate site. Asp396, His400, Asp437, His438, and His455 together coordinate Mn(2+).

It belongs to the BPG-independent phosphoglycerate mutase family. Monomer. It depends on Mn(2+) as a cofactor.

It carries out the reaction (2R)-2-phosphoglycerate = (2R)-3-phosphoglycerate. It participates in carbohydrate degradation; glycolysis; pyruvate from D-glyceraldehyde 3-phosphate: step 3/5. In terms of biological role, catalyzes the interconversion of 2-phosphoglycerate and 3-phosphoglycerate. This Bacteroides thetaiotaomicron (strain ATCC 29148 / DSM 2079 / JCM 5827 / CCUG 10774 / NCTC 10582 / VPI-5482 / E50) protein is 2,3-bisphosphoglycerate-independent phosphoglycerate mutase.